A 445-amino-acid polypeptide reads, in one-letter code: Hydroxymethylglutaryl-CoA synthase (445 aa).

Position 31 (Asp-31) interacts with (3S)-3-hydroxy-3-methylglutaryl-CoA. The active-site Proton donor/acceptor is Glu-83. Positions 120, 163, 211, 244, 253, 328, and 364 each coordinate (3S)-3-hydroxy-3-methylglutaryl-CoA. Cys-120 acts as the Acyl-thioester intermediate in catalysis. The Proton donor/acceptor role is filled by His-244.

Belongs to the thiolase-like superfamily. HMG-CoA synthase family.

It carries out the reaction acetoacetyl-CoA + acetyl-CoA + H2O = (3S)-3-hydroxy-3-methylglutaryl-CoA + CoA + H(+). The protein operates within metabolic intermediate biosynthesis; (R)-mevalonate biosynthesis; (R)-mevalonate from acetyl-CoA: step 2/3. In contrast to bacterial and eukaryotic HMG-CoA synthases, is insensitive to feedback substrate inhibition by acetoacetyl-CoA. Enzymatic activity is inhibited by hymeglusin, which also blocks the propagation of H.volcanii cells in vivo, indicating the critical role that the mevalonate pathway plays in isoprenoid biosynthesis by these archaea. Functionally, catalyzes the condensation of acetyl-CoA with acetoacetyl-CoA to form 3-hydroxy-3-methylglutaryl-CoA (HMG-CoA). Functions in the mevalonate (MVA) pathway leading to isopentenyl diphosphate (IPP), a key precursor for the biosynthesis of isoprenoid compounds such as archaeal membrane lipids. The protein is Hydroxymethylglutaryl-CoA synthase (hmgB) of Haloferax volcanii (strain ATCC 29605 / DSM 3757 / JCM 8879 / NBRC 14742 / NCIMB 2012 / VKM B-1768 / DS2) (Halobacterium volcanii).